Here is a 491-residue protein sequence, read N- to C-terminus: Aspartyl/glutamyl-tRNA(Asn/Gln) amidotransferase subunit B (491 aa).

It belongs to the GatB/GatE family. GatB subfamily. As to quaternary structure, heterotrimer of A, B and C subunits.

The enzyme catalyses L-glutamyl-tRNA(Gln) + L-glutamine + ATP + H2O = L-glutaminyl-tRNA(Gln) + L-glutamate + ADP + phosphate + H(+). It catalyses the reaction L-aspartyl-tRNA(Asn) + L-glutamine + ATP + H2O = L-asparaginyl-tRNA(Asn) + L-glutamate + ADP + phosphate + 2 H(+). Allows the formation of correctly charged Asn-tRNA(Asn) or Gln-tRNA(Gln) through the transamidation of misacylated Asp-tRNA(Asn) or Glu-tRNA(Gln) in organisms which lack either or both of asparaginyl-tRNA or glutaminyl-tRNA synthetases. The reaction takes place in the presence of glutamine and ATP through an activated phospho-Asp-tRNA(Asn) or phospho-Glu-tRNA(Gln). The sequence is that of Aspartyl/glutamyl-tRNA(Asn/Gln) amidotransferase subunit B from Nostoc sp. (strain PCC 7120 / SAG 25.82 / UTEX 2576).